Consider the following 72-residue polypeptide: Translation initiation factor IF-1 (72 aa).

One can recognise an S1-like domain in the interval 1–72 (MAKQDVIELE…SRGRITYRYK (72 aa)).

The protein belongs to the IF-1 family. In terms of assembly, component of the 30S ribosomal translation pre-initiation complex which assembles on the 30S ribosome in the order IF-2 and IF-3, IF-1 and N-formylmethionyl-tRNA(fMet); mRNA recruitment can occur at any time during PIC assembly.

The protein localises to the cytoplasm. Functionally, one of the essential components for the initiation of protein synthesis. Stabilizes the binding of IF-2 and IF-3 on the 30S subunit to which N-formylmethionyl-tRNA(fMet) subsequently binds. Helps modulate mRNA selection, yielding the 30S pre-initiation complex (PIC). Upon addition of the 50S ribosomal subunit IF-1, IF-2 and IF-3 are released leaving the mature 70S translation initiation complex. The sequence is that of Translation initiation factor IF-1 from Staphylococcus epidermidis (strain ATCC 35984 / DSM 28319 / BCRC 17069 / CCUG 31568 / BM 3577 / RP62A).